Consider the following 215-residue polypeptide: LysM and putative peptidoglycan-binding domain-containing protein 2 (215 aa).

The interval 1–40 (MADLSPAPALREGGPRAHRPSAPSPPPRSRSTSEPEEAEL) is disordered. Ala2 carries the post-translational modification N-acetylalanine. A phosphoserine mark is found at Ser5, Ser24, Ser33, and Ser57. In terms of domain architecture, LysM spans 71 to 115 (VEHRVRAGDTLQGIALKYGVTMEQIKRANKLFTNDCIFLKKTLSI). Disordered stretches follow at residues 135 to 176 (ESET…EVSA) and 195 to 215 (RKLK…LYHS). Residues 145–156 (QEEEPVVSEEEL) are compositionally biased toward acidic residues. A compositionally biased stretch (pro residues) spans 157 to 169 (PPPSPQDPDPKPA). Residues 196–205 (KLKEESRDEE) are compositionally biased toward basic and acidic residues.

This Mus musculus (Mouse) protein is LysM and putative peptidoglycan-binding domain-containing protein 2 (Lysmd2).